We begin with the raw amino-acid sequence, 427 residues long: Fc receptor-like B (427 aa).

Residues 1–17 form the signal peptide; sequence MWMLAALLLLVPRSGKA. 2 consecutive Ig-like C2-type domains span residues 23-101 and 103-189; these read PVLT…LSVS and DWLI…VAVT. 2 disulfides stabilise this stretch: C44–C85 and C124–C168. N-linked (GlcNAc...) asparagine glycosylation is present at N152. Residues 401–418 show a composition bias toward polar residues; the sequence is TPETPNSHVTVNPATPET. The interval 401-427 is disordered; that stretch reads TPETPNSHVTVNPATPETTVMEGRVDS.

As to expression, expressed at low levels. Expressed in B-lymphocytes. Detected in spleen, lymph node, kidney, lung and brain.

The protein resides in the cytoplasm. It localises to the endoplasmic reticulum. The protein is Fc receptor-like B (Fcrlb) of Mus musculus (Mouse).